The chain runs to 332 residues: 6-phosphogluconolactonase (332 aa).

Belongs to the cycloisomerase 2 family.

It catalyses the reaction 6-phospho-D-glucono-1,5-lactone + H2O = 6-phospho-D-gluconate + H(+). It functions in the pathway carbohydrate degradation; pentose phosphate pathway; D-ribulose 5-phosphate from D-glucose 6-phosphate (oxidative stage): step 2/3. Its function is as follows. Catalyzes the hydrolysis of 6-phosphogluconolactone to 6-phosphogluconate. This Pectobacterium atrosepticum (strain SCRI 1043 / ATCC BAA-672) (Erwinia carotovora subsp. atroseptica) protein is 6-phosphogluconolactonase.